Here is a 218-residue protein sequence, read N- to C-terminus: Small ribosomal subunit protein uS3 (218 aa).

In terms of domain architecture, KH type-2 spans 38 to 107 (VREYIEKRLK…RVHVNVVEVK (70 aa)).

It belongs to the universal ribosomal protein uS3 family. In terms of assembly, part of the 30S ribosomal subunit. Forms a tight complex with proteins S10 and S14.

In terms of biological role, binds the lower part of the 30S subunit head. Binds mRNA in the 70S ribosome, positioning it for translation. This chain is Small ribosomal subunit protein uS3, found in Exiguobacterium sibiricum (strain DSM 17290 / CCUG 55495 / CIP 109462 / JCM 13490 / 255-15).